A 513-amino-acid polypeptide reads, in one-letter code: Noroxomaritidine synthase 1 (513 aa).

Residues 18–34 (ILIAIACLVVFSLLRSA) traverse the membrane as a helical segment. Cys458 contacts heme.

Belongs to the cytochrome P450 family. The cofactor is heme. As to expression, mostly expressed in stems, and, to a lower extent, in bulbs, roots, leaves and flowers.

It localises to the membrane. The catalysed reaction is 4'-O-methylnorbelladine + reduced [NADPH--hemoprotein reductase] + O2 = (10bR,4aS)-noroxomaritidine + oxidized [NADPH--hemoprotein reductase] + 2 H2O + H(+). The enzyme catalyses 4'-O-methylnorbelladine + reduced [NADPH--hemoprotein reductase] + O2 = (10bS,4aR)-noroxomaritidine + oxidized [NADPH--hemoprotein reductase] + 2 H2O + H(+). It participates in alkaloid biosynthesis. Cytochrome P450 that catalyzes an intramolecular para-para' C-C phenol coupling of 4'-O-methylnorbelladine in alkaloids biosynthesis, including haemanthamine- and crinamine-type alkaloids, promising anticancer agents. Catalyzes the formation of (10bR,4aS)-noroxomaritidine and (10bS,4aR)-noroxomaritidine from 4'-O-methylnorbelladine. This chain is Noroxomaritidine synthase 1, found in Narcissus pseudonarcissus (Daffodil).